Consider the following 302-residue polypeptide: MSVFIDKNTKVMVQGITGSTALFHTKQMLDYGTKIVAGVTPGKGGQVVEGVPVFNTVEEAKNETGATVSVIYVPAPFAADSILEAADADLDMVICITEHIPVLDMVKVKRYLQGRKTRLVGPNCPGVITADECKIGIMPGYIHKKGHVGVVSRSGTLTYEAVHQLTEEGIGQTTAVGIGGDPVNGTNFIDVLKAFNEDDETKAVVMIGEIGGTAEEEAAEWIKANMTKPVVGFIGGQTAPPGKRMGHAGAIISGGKGTAEEKIKTLNSCGVKTAATPSEIGSTLIEAAKEAGIYEALLTVNK.

Residues 17–20, Lys-43, and 96–98 contribute to the CoA site; these read TGST and ITE. Tyr-159 contacts substrate. The Tele-phosphohistidine intermediate role is filled by His-247.

The protein belongs to the succinate/malate CoA ligase alpha subunit family. Heterotetramer of two alpha and two beta subunits.

The catalysed reaction is succinate + ATP + CoA = succinyl-CoA + ADP + phosphate. It catalyses the reaction GTP + succinate + CoA = succinyl-CoA + GDP + phosphate. Its pathway is carbohydrate metabolism; tricarboxylic acid cycle; succinate from succinyl-CoA (ligase route): step 1/1. In terms of biological role, succinyl-CoA synthetase functions in the citric acid cycle (TCA), coupling the hydrolysis of succinyl-CoA to the synthesis of either ATP or GTP and thus represents the only step of substrate-level phosphorylation in the TCA. The alpha subunit of the enzyme binds the substrates coenzyme A and phosphate, while succinate binding and nucleotide specificity is provided by the beta subunit. The polypeptide is Succinate--CoA ligase [ADP-forming] subunit alpha (Staphylococcus aureus (strain MSSA476)).